The chain runs to 509 residues: Methylmalonyl-CoA decarboxylase subunit alpha (509 aa).

In terms of domain architecture, CoA carboxyltransferase N-terminal spans 4–260 (VQEKIELLHE…NNMEDAPLVD (257 aa)). The CoA carboxyltransferase C-terminal domain occupies 267-503 (REDESLNSLL…SKRENRAPKK (237 aa)).

This sequence belongs to the AccD/PCCB family. As to quaternary structure, the methylmalonyl-CoA decarboxylase is composed of five subunits: the carboxyltransferase alpha subunit (MmdA), the tunnel beta subunit (MmdB), the biotin-containing gamma subunit (MmdC), and the delta (MmdD) and epsilon (MmdE) subunits. Interacts with the gamma subunit.

The protein resides in the cell membrane. The enzyme catalyses (S)-methylmalonyl-CoA + Na(+)(in) + H(+)(out) = propanoyl-CoA + Na(+)(out) + CO2. Its activity is regulated as follows. Completely inhibited by avidin. Functionally, carboxyltransferase subunit of the sodium ion pump methylmalonyl-CoA decarboxylase, which converts the chemical energy of a decarboxylation reaction into an electrochemical gradient of Na(+) ions across the cytoplasmic membrane, thereby creating a sodium ion motive force that is used for ATP synthesis. The alpha subunit catalyzes the Na(+)-independent carboxyltransfer from methylmalonyl-CoA to the prosthetic biotin group located on the gamma subunit. Can also convert malonyl-CoA into acetyl-CoA. The chain is Methylmalonyl-CoA decarboxylase subunit alpha from Veillonella parvula (Staphylococcus parvulus).